A 476-amino-acid polypeptide reads, in one-letter code: Doublesex and mab-3 related transcription factor 3 (476 aa).

The DM DNA-binding region spans 29 to 76 (CARCRNHGVLSWLKGHKRYCRFKDCTCEKCILIIERQRVMAAQVALRR). Disordered regions lie at residues 89–130 (DSLR…RPAT) and 147–195 (GTLP…SKNC). Over residues 102-121 (DAAATAATASQSSPASQASQ) the composition is skewed to low complexity. The segment covering 176-185 (FSDKDTDQRS) has biased composition (basic and acidic residues). Residues 255 to 290 (RPPLEVLKKIFPNQKPTVLELILKGCGGDLVSAVEV) enclose the DMA domain. Positions 418 to 432 (NSTSVFRSSPVLSSR) are enriched in polar residues. Residues 418–476 (NSTSVFRSSPVLSSRTTEDPRISIPDDGCPIVAKQSIYTEDDYDERSDSSDSRILNTSS) form a disordered region.

This sequence belongs to the DMRT family.

The protein localises to the nucleus. In terms of biological role, probable transcription factor that plays a role in configuring the spinal circuits controlling stride in vertebrates. Involved in neuronal specification within a specific subdivision of spinal cord neurons and in the development of a coordinated locomotor network controlling limb movements. May regulate transcription during sexual development. The protein is Doublesex and mab-3 related transcription factor 3 (Dmrt3) of Rattus norvegicus (Rat).